An 879-amino-acid polypeptide reads, in one-letter code: Metabotropic glutamate receptor 3 (879 aa).

Residues 1-22 (MKMLTRLQILMLALFSKGFLLS) form the signal peptide. At 23 to 576 (LGDHNFMRRE…EDYIKWEDAW (554 aa)) the chain is on the extracellular side. A disulfide bridge links Cys57 with Cys99. L-glutamate is bound by residues Arg68, Ser151, and 172-174 (AST). Asn209 carries an N-linked (GlcNAc...) asparagine glycan. Tyr222 contributes to the L-glutamate binding site. 7 cysteine pairs are disulfide-bonded: Cys240-Cys527, Cys361-Cys373, Cys412-Cys419, Cys509-Cys528, Cys513-Cys531, Cys534-Cys546, and Cys549-Cys562. Asn292 carries an N-linked (GlcNAc...) asparagine glycan. Asp301 provides a ligand contact to L-glutamate. Lys389 lines the L-glutamate pocket. N-linked (GlcNAc...) asparagine glycosylation is found at Asn414 and Asn439. A helical membrane pass occupies residues 577 to 599 (AIGPVTIACLGFLCTCIVITVFI). Over 600-613 (KHNNTPLVKASGRE) the chain is Cytoplasmic. Residues 614-634 (LCYILLFGVSLSYCMTFFFIA) form a helical membrane-spanning segment. Over 635 to 645 (KPSPVICALRR) the chain is Extracellular. The chain crosses the membrane as a helical span at residues 646–664 (LGLGTSFAICYSALLTKTN). Over 665–688 (CIARIFDGVKNGAQRPKFISPSSQ) the chain is Cytoplasmic. Residues 689–709 (VFICLGLILVQIVMVSVWLIL) form a helical membrane-spanning segment. The Extracellular segment spans residues 710–734 (ETPGTRRYTLPEKRETVILKCNVKD). The chain crosses the membrane as a helical span at residues 735–756 (SSMLISLTYDVVLVILCTVYAF). Residues 757–769 (KTRKCPENFNEAK) lie on the Cytoplasmic side of the membrane. A helical transmembrane segment spans residues 770-792 (FIGFTMYTTCIIWLAFLPIFYVT). Topologically, residues 793 to 802 (SSDYRVQTTT) are extracellular. A helical membrane pass occupies residues 803–828 (MCISVSLSGFVVLGCLFAPKVHIVLF). The Cytoplasmic segment spans residues 829–879 (QPQKNVVTHRLHLNRFSVSGTATTYSQSSASTYVPTVCNGREVLDSTTSSL).

Belongs to the G-protein coupled receptor 3 family. Interacts with TAMALIN. Is widely distributed in the CNS. Predominant expression is seen in the neuronal cells of the cerebral cortex, dentate gyrus, and glial cells throughout brain regions.

It is found in the cell membrane. Its function is as follows. G-protein coupled receptor for glutamate. Ligand binding causes a conformation change that triggers signaling via guanine nucleotide-binding proteins (G proteins) and modulates the activity of down-stream effectors. Signaling inhibits adenylate cyclase activity. This Rattus norvegicus (Rat) protein is Metabotropic glutamate receptor 3 (Grm3).